Consider the following 152-residue polypeptide: Lipoprotein signal peptidase (152 aa).

The next 3 helical transmembrane spans lie at L5–V25, W61–H81, and L84–I104. Residues D114 and D130 contribute to the active site. Residues I125–W145 traverse the membrane as a helical segment.

Belongs to the peptidase A8 family.

It is found in the cell membrane. It catalyses the reaction Release of signal peptides from bacterial membrane prolipoproteins. Hydrolyzes -Xaa-Yaa-Zaa-|-(S,diacylglyceryl)Cys-, in which Xaa is hydrophobic (preferably Leu), and Yaa (Ala or Ser) and Zaa (Gly or Ala) have small, neutral side chains.. It participates in protein modification; lipoprotein biosynthesis (signal peptide cleavage). Its function is as follows. This protein specifically catalyzes the removal of signal peptides from prolipoproteins. The polypeptide is Lipoprotein signal peptidase (Streptococcus pyogenes serotype M3 (strain ATCC BAA-595 / MGAS315)).